A 350-amino-acid polypeptide reads, in one-letter code: Beta-ketoacyl-[acyl-carrier-protein] synthase III (350 aa).

Residues Cys-120 and His-256 contribute to the active site. An ACP-binding region spans residues 257-261 (QANVR). Asn-286 is an active-site residue.

The protein belongs to the thiolase-like superfamily. FabH family. In terms of assembly, homodimer.

It is found in the cytoplasm. The catalysed reaction is malonyl-[ACP] + acetyl-CoA + H(+) = 3-oxobutanoyl-[ACP] + CO2 + CoA. The protein operates within lipid metabolism; fatty acid biosynthesis. In terms of biological role, catalyzes the condensation reaction of fatty acid synthesis by the addition to an acyl acceptor of two carbons from malonyl-ACP. Catalyzes the first condensation reaction which initiates fatty acid synthesis and may therefore play a role in governing the total rate of fatty acid production. Possesses both acetoacetyl-ACP synthase and acetyl transacylase activities. Its substrate specificity determines the biosynthesis of branched-chain and/or straight-chain of fatty acids. This chain is Beta-ketoacyl-[acyl-carrier-protein] synthase III, found in Deinococcus deserti (strain DSM 17065 / CIP 109153 / LMG 22923 / VCD115).